The chain runs to 1120 residues: Phosphatidylinositide phosphatase SAC2 (1120 aa).

Positions 167-518 constitute an SAC domain; the sequence is YKIFMDSDSF…GDTISRQYAG (352 aa). Residues 593–760 enclose the hSac2 domain; the sequence is RGAQEQVSLL…RHSKPHEDIM (168 aa). 2 disordered regions span residues 837–881 and 979–1008; these read SSLE…SREN and PAPK…LPRP. A compositionally biased stretch (basic and acidic residues) spans 851–860; that stretch reads LKDHGPHSEE. Composition is skewed to polar residues over residues 864-879 and 998-1007; these read DSDS…SGSR and SSHSQNQLPR.

It localises to the membrane. The protein resides in the clathrin-coated pit. It is found in the early endosome. Its subcellular location is the recycling endosome. It carries out the reaction a myo-inositol phosphate + H2O = myo-inositol + phosphate. Its function is as follows. Inositol 4-phosphatase which mainly acts on phosphatidylinositol 4-phosphate. May be functionally linked to OCRL, which converts phosphatidylinositol 4,5-bisphosphate to phosphatidylinositol, for a sequential dephosphorylation of phosphatidylinositol 4,5-bisphosphate at the 5 and 4 position of inositol, thus playing an important role in the endocytic recycling. This chain is Phosphatidylinositide phosphatase SAC2, found in Danio rerio (Zebrafish).